A 170-amino-acid chain; its full sequence is Phosphopantetheine adenylyltransferase (170 aa).

Threonine 18 is a substrate binding site. ATP-binding positions include 18-19 (TF) and histidine 26. Substrate contacts are provided by lysine 50, leucine 84, and arginine 98. ATP is bound by residues 99-101 (GLR), glutamate 109, and 134-140 (WIYISSS).

The protein belongs to the bacterial CoaD family. Homohexamer. It depends on Mg(2+) as a cofactor.

Its subcellular location is the cytoplasm. The catalysed reaction is (R)-4'-phosphopantetheine + ATP + H(+) = 3'-dephospho-CoA + diphosphate. The protein operates within cofactor biosynthesis; coenzyme A biosynthesis; CoA from (R)-pantothenate: step 4/5. In terms of biological role, reversibly transfers an adenylyl group from ATP to 4'-phosphopantetheine, yielding dephospho-CoA (dPCoA) and pyrophosphate. This is Phosphopantetheine adenylyltransferase from Desulfotalea psychrophila (strain LSv54 / DSM 12343).